Consider the following 312-residue polypeptide: Methionyl-tRNA formyltransferase (312 aa).

112–115 (SLLP) lines the (6S)-5,6,7,8-tetrahydrofolate pocket.

The protein belongs to the Fmt family.

It catalyses the reaction L-methionyl-tRNA(fMet) + (6R)-10-formyltetrahydrofolate = N-formyl-L-methionyl-tRNA(fMet) + (6S)-5,6,7,8-tetrahydrofolate + H(+). In terms of biological role, attaches a formyl group to the free amino group of methionyl-tRNA(fMet). The formyl group appears to play a dual role in the initiator identity of N-formylmethionyl-tRNA by promoting its recognition by IF2 and preventing the misappropriation of this tRNA by the elongation apparatus. The protein is Methionyl-tRNA formyltransferase of Dehalococcoides mccartyi (strain ATCC BAA-2266 / KCTC 15142 / 195) (Dehalococcoides ethenogenes (strain 195)).